A 424-amino-acid polypeptide reads, in one-letter code: Serine hydroxymethyltransferase (424 aa).

(6S)-5,6,7,8-tetrahydrofolate contacts are provided by residues Leu-113 and 117-119; that span reads GHL. Lys-222 is modified (N6-(pyridoxal phosphate)lysine). 361-363 is a binding site for (6S)-5,6,7,8-tetrahydrofolate; the sequence is SPF.

The protein belongs to the SHMT family. In terms of assembly, homodimer. The cofactor is pyridoxal 5'-phosphate.

It is found in the cytoplasm. It catalyses the reaction (6R)-5,10-methylene-5,6,7,8-tetrahydrofolate + glycine + H2O = (6S)-5,6,7,8-tetrahydrofolate + L-serine. The protein operates within one-carbon metabolism; tetrahydrofolate interconversion. It functions in the pathway amino-acid biosynthesis; glycine biosynthesis; glycine from L-serine: step 1/1. Its function is as follows. Catalyzes the reversible interconversion of serine and glycine with tetrahydrofolate (THF) serving as the one-carbon carrier. This reaction serves as the major source of one-carbon groups required for the biosynthesis of purines, thymidylate, methionine, and other important biomolecules. Also exhibits THF-independent aldolase activity toward beta-hydroxyamino acids, producing glycine and aldehydes, via a retro-aldol mechanism. In Flavobacterium johnsoniae (strain ATCC 17061 / DSM 2064 / JCM 8514 / BCRC 14874 / CCUG 350202 / NBRC 14942 / NCIMB 11054 / UW101) (Cytophaga johnsonae), this protein is Serine hydroxymethyltransferase.